We begin with the raw amino-acid sequence, 311 residues long: Formimidoylglutamase (311 aa).

Mn(2+) contacts are provided by His-122, Asp-151, His-153, Asp-155, Cys-242, and Asp-244.

This sequence belongs to the arginase family. Mn(2+) serves as cofactor.

It catalyses the reaction N-formimidoyl-L-glutamate + H2O = formamide + L-glutamate. Its pathway is amino-acid degradation; L-histidine degradation into L-glutamate; L-glutamate from N-formimidoyl-L-glutamate (hydrolase route): step 1/1. Catalyzes the conversion of N-formimidoyl-L-glutamate to L-glutamate and formamide. The chain is Formimidoylglutamase from Pseudomonas paraeruginosa (strain DSM 24068 / PA7) (Pseudomonas aeruginosa (strain PA7)).